Here is a 205-residue protein sequence, read N- to C-terminus: Pyridoxal 5'-phosphate synthase subunit PdxT (205 aa).

Residue 54 to 56 (GES) coordinates L-glutamine. Cys-86 serves as the catalytic Nucleophile. L-glutamine-binding positions include Arg-118 and 147-148 (IR). Catalysis depends on charge relay system residues His-183 and Glu-185.

It belongs to the glutaminase PdxT/SNO family. In terms of assembly, in the presence of PdxS, forms a dodecamer of heterodimers. Only shows activity in the heterodimer.

It catalyses the reaction aldehydo-D-ribose 5-phosphate + D-glyceraldehyde 3-phosphate + L-glutamine = pyridoxal 5'-phosphate + L-glutamate + phosphate + 3 H2O + H(+). It carries out the reaction L-glutamine + H2O = L-glutamate + NH4(+). The protein operates within cofactor biosynthesis; pyridoxal 5'-phosphate biosynthesis. Functionally, catalyzes the hydrolysis of glutamine to glutamate and ammonia as part of the biosynthesis of pyridoxal 5'-phosphate. The resulting ammonia molecule is channeled to the active site of PdxS. The protein is Pyridoxal 5'-phosphate synthase subunit PdxT of Nitrosopumilus maritimus (strain SCM1).